A 557-amino-acid chain; its full sequence is Putative sensory transducer protein (557 aa).

The chain crosses the membrane as a helical span at residues 122-145 (TASTVMIVVIFVGILIAIALGVFI). One can recognise an HAMP domain in the interval 147 to 199 (RIISKPIGQMVEAADRLALGDVEVDVKAETRDEIGKLAESFKRMIENIREQAY). One can recognise a Methyl-accepting transducer domain in the interval 243 to 472 (VAAQVAAGAK…ESAAASEELS (230 aa)). Q268 is subject to Glutamate methyl ester (Gln). E274 is subject to Glutamate methyl ester (Glu). Residue Q281 is modified to Glutamate methyl ester (Gln). A Glutamate methyl ester (Glu) modification is found at E463. Over residues 511 to 541 (DYTENKQPKSYSKEENGEYSDGKETAEKDVG) the composition is skewed to basic and acidic residues. The tract at residues 511–542 (DYTENKQPKSYSKEENGEYSDGKETAEKDVGG) is disordered.

Belongs to the methyl-accepting chemotaxis (MCP) protein family.

The protein resides in the cell membrane. May bind attractants or detect changes in the extracellular concentration of soluble sugars. This chain is Putative sensory transducer protein, found in Acetivibrio thermocellus (strain ATCC 27405 / DSM 1237 / JCM 9322 / NBRC 103400 / NCIMB 10682 / NRRL B-4536 / VPI 7372) (Clostridium thermocellum).